The chain runs to 188 residues: Cell division protein ZapC (188 aa).

This sequence belongs to the ZapC family. In terms of assembly, interacts directly with FtsZ.

The protein resides in the cytoplasm. Functionally, contributes to the efficiency of the cell division process by stabilizing the polymeric form of the cell division protein FtsZ. Acts by promoting interactions between FtsZ protofilaments and suppressing the GTPase activity of FtsZ. The sequence is that of Cell division protein ZapC from Psychromonas ingrahamii (strain DSM 17664 / CCUG 51855 / 37).